A 1162-amino-acid polypeptide reads, in one-letter code: Nucleoporin nup132 (1162 aa).

It belongs to the nucleoporin Nup133 family. In terms of assembly, component of the npc107-120 complex which consists of nup85, nup107, nup120, nup131, nup132 and seh1. Interacts with nup107.

Its subcellular location is the nucleus envelope. Functions as a component of the nuclear pore complex (NPC). NPC components, collectively referred to as nucleoporins (NUPs), can play the role of both NPC structural components and of docking or interaction partners for transiently associated nuclear transport factors. Active directional transport is assured by both, a Phe-Gly (FG) repeat affinity gradient for these transport factors across the NPC and a transport cofactor concentration gradient across the nuclear envelope. The chain is Nucleoporin nup132 (nup132) from Schizosaccharomyces pombe (strain 972 / ATCC 24843) (Fission yeast).